The chain runs to 180 residues: uncharacterized protein (180 aa).

A run of 6 helical transmembrane segments spans residues 4–24, 25–45, 57–77, 81–101, 124–144, and 156–176; these read KSNIKLILATDLLAVLILSLF, IKNFKMVLAFLLAVFVIWLFI, NLLAMSVGFIEGILIFLGIIY, FLDITLGIFAILILIVMGILF, FLTLISIFGMLLTIYVFLLIL, and IIRTIMLVITANMFIIEFYTF.

Its subcellular location is the cell membrane. This is an uncharacterized protein from Methanocaldococcus jannaschii (strain ATCC 43067 / DSM 2661 / JAL-1 / JCM 10045 / NBRC 100440) (Methanococcus jannaschii).